Here is a 203-residue protein sequence, read N- to C-terminus: Dual-action ribosomal maturation protein DarP (203 aa).

Disordered regions lie at residues 1–31 and 178–203; these read MTRK…SQLK and NADG…DRDA. Over residues 21-31 the composition is skewed to basic and acidic residues; it reads GYDRPSKSQLK. Positions 188–203 are enriched in acidic residues; that stretch reads SEADDAQDDEDDDRDA.

Belongs to the DarP family.

The protein localises to the cytoplasm. In terms of biological role, member of a network of 50S ribosomal subunit biogenesis factors which assembles along the 30S-50S interface, preventing incorrect 23S rRNA structures from forming. Promotes peptidyl transferase center (PTC) maturation. The sequence is that of Dual-action ribosomal maturation protein DarP from Paraburkholderia xenovorans (strain LB400).